A 307-amino-acid chain; its full sequence is Ribosomal protein L11 methyltransferase (307 aa).

The S-adenosyl-L-methionine site is built by threonine 162, glycine 183, aspartate 205, and asparagine 244.

Belongs to the methyltransferase superfamily. PrmA family.

Its subcellular location is the cytoplasm. The catalysed reaction is L-lysyl-[protein] + 3 S-adenosyl-L-methionine = N(6),N(6),N(6)-trimethyl-L-lysyl-[protein] + 3 S-adenosyl-L-homocysteine + 3 H(+). In terms of biological role, methylates ribosomal protein L11. The chain is Ribosomal protein L11 methyltransferase from Bordetella bronchiseptica (strain ATCC BAA-588 / NCTC 13252 / RB50) (Alcaligenes bronchisepticus).